A 257-amino-acid chain; its full sequence is uncharacterized protein (257 aa).

Residues 7–27 form a helical membrane-spanning segment; that stretch reads IGILEIVVILSILITSVSLAY.

The protein localises to the membrane. This is an uncharacterized protein from Methanocaldococcus jannaschii (strain ATCC 43067 / DSM 2661 / JAL-1 / JCM 10045 / NBRC 100440) (Methanococcus jannaschii).